A 272-amino-acid polypeptide reads, in one-letter code: 5'-nucleotidase SurE (272 aa).

The a divalent metal cation site is built by Asp28, Asp29, Ser59, and Asn115.

It belongs to the SurE nucleotidase family. The cofactor is a divalent metal cation.

It localises to the cytoplasm. It catalyses the reaction a ribonucleoside 5'-phosphate + H2O = a ribonucleoside + phosphate. Nucleotidase that shows phosphatase activity on nucleoside 5'-monophosphates. In Chlorobium chlorochromatii (strain CaD3), this protein is 5'-nucleotidase SurE.